We begin with the raw amino-acid sequence, 543 residues long: Pectate disaccharide-lyase (543 aa).

The protein belongs to the polysaccharide lyase 2 family. Cu cation serves as cofactor. Requires Mn(2+) as cofactor. It depends on Ni(2+) as a cofactor.

Its subcellular location is the cytoplasm. It carries out the reaction [(1-&gt;4)-alpha-D-galacturonosyl](n) = 4-(4-deoxy-alpha-D-galact-4-enuronosyl)-D-galacturonate + [(1-&gt;4)-alpha-D-galacturonosyl](n-2). Its pathway is glycan metabolism; pectin degradation. Its function is as follows. Catalyzes the formation of unsaturated digalacturonates from polygalacturonate or short oligogalacturonates. In Dickeya dadantii (strain 3937) (Erwinia chrysanthemi (strain 3937)), this protein is Pectate disaccharide-lyase (pelW).